The chain runs to 352 residues: E3 ubiquitin-protein ligase RNF146 (352 aa).

The RING-type zinc finger occupies 36-74 (CAICLQTCVHPVSLPCKHVFCYLCVKGASWLGKRCALCR). Residues K84 and K94 each participate in a glycyl lysine isopeptide (Lys-Gly) (interchain with G-Cter in ubiquitin) cross-link. Positions 91-167 (EELKAASRGN…EHGRRRKIKR (77 aa)) constitute a WWE domain. A glycoprotein-binding residues include Y107, R110, and W114. K130 is covalently cross-linked (Glycyl lysine isopeptide (Lys-Gly) (interchain with G-Cter in ubiquitin)). Positions 144, 153, 163, and 175 each coordinate a glycoprotein. K175 participates in a covalent cross-link: Glycyl lysine isopeptide (Lys-Gly) (interchain with G-Cter in ubiquitin). Disordered stretches follow at residues 195–242 (SSAD…AGAS), 259–293 (ERSH…ASSD), and 317–352 (NQTV…VTEV). A compositionally biased stretch (low complexity) spans 197-210 (ADGADSGSAHTGAS). The segment covering 215 to 233 (VPSSTRPLTSVDGQLTSPV) has biased composition (polar residues). The span at 282 to 293 (STEETESDASSD) shows a compositional bias: acidic residues. Phosphoserine is present on residues S288 and S292.

Can form homooligomers. Interacts with PARsylated AXIN1, AXIN2, BLZF1, CASC3, H1-2, IPO7, LIG3, NCL, PARP1, XRCC1, XRCC5 and XRCC6. Interacts with DDB1, DHX15, IQGAP1, LRPPRC, PARP2, PRKDC, RUVBL2, TNKS1 and TNKS2. Binding often leads to interactor ubiquitination, in the presence of the appropriate E1 and E2 enzymes, and proteasomal degradation. Ubiquitinated; autoubiquitinated. Autoubiquitination is enhanced upon poly(ADP-ribose)-binding.

It localises to the cytoplasm. The protein localises to the cytosol. The protein resides in the nucleus. It catalyses the reaction S-ubiquitinyl-[E2 ubiquitin-conjugating enzyme]-L-cysteine + [acceptor protein]-L-lysine = [E2 ubiquitin-conjugating enzyme]-L-cysteine + N(6)-ubiquitinyl-[acceptor protein]-L-lysine.. It functions in the pathway protein modification; protein ubiquitination. Functionally, E3 ubiquitin-protein ligase that specifically binds poly-ADP-ribosylated (PARsylated) proteins and mediates their ubiquitination and subsequent degradation. May regulate many important biological processes, such as cell survival and DNA damage response. Acts as an activator of the Wnt signaling pathway by mediating the ubiquitination of PARsylated AXIN1 and AXIN2, 2 key components of the beta-catenin destruction complex. Acts in cooperation with tankyrase proteins (TNKS and TNKS2), which mediate PARsylation of target proteins AXIN1, AXIN2, BLZF1, CASC3, TNKS and TNKS2. Recognizes and binds tankyrase-dependent PARsylated proteins via its WWE domain and mediates their ubiquitination, leading to their degradation. Different ubiquitin linkage types have been observed: TNKS2 undergoes ubiquitination at 'Lys-48' and 'Lys-63', while AXIN1 is only ubiquitinated at 'Lys-48'. May regulate TNKS and TNKS2 subcellular location, preventing aggregation at a centrosomal location. Neuroprotective protein. Protects the brain against N-methyl-D-aspartate (NMDA) receptor-mediated glutamate excitotoxicity and ischemia, by interfering with PAR-induced cell death, called parthanatos. Prevents nuclear translocation of AIFM1 in a PAR-binding dependent manner. Does not affect PARP1 activation. Protects against cell death induced by DNA damaging agents, such as N-methyl-N-nitro-N-nitrosoguanidine (MNNG) and rescues cells from G1 arrest. Promotes cell survival after gamma-irradiation. Facilitates DNA repair. The sequence is that of E3 ubiquitin-protein ligase RNF146 (Rnf146) from Rattus norvegicus (Rat).